Here is a 727-residue protein sequence, read N- to C-terminus: ATP-dependent RNA helicase Ddx1 (727 aa).

Positions 2–428 (TAFEEFGVLP…AERLMHFPTW (427 aa)) constitute a Helicase ATP-binding domain. ATP is bound at residue 46 to 53 (AETGSGKT). Residues 69 to 246 (RDLEEGKAGK…MQFNFGKTDF (178 aa)) enclose the B30.2/SPRY domain. The short motif at 370 to 373 (DEAD) is the DEAD box element. A Helicase C-terminal domain is found at 483–676 (TLSQAVKLLK…QVDKTMDVPV (194 aa)).

Belongs to the DEAD box helicase family. DDX1 subfamily.

It carries out the reaction ATP + H2O = ADP + phosphate + H(+). Acts as an ATP-dependent RNA helicase, able to unwind both RNA-RNA and RNA-DNA duplexes. Possesses 5' single-stranded RNA overhang nuclease activity. The sequence is that of ATP-dependent RNA helicase Ddx1 (Ddx1) from Drosophila melanogaster (Fruit fly).